Here is a 177-residue protein sequence, read N- to C-terminus: ATP synthase subunit b (177 aa).

The chain crosses the membrane as a helical span at residues 29–49 (FFFVLAIFLIVLAVIGTFVVP).

This sequence belongs to the ATPase B chain family. In terms of assembly, F-type ATPases have 2 components, F(1) - the catalytic core - and F(0) - the membrane proton channel. F(1) has five subunits: alpha(3), beta(3), gamma(1), delta(1), epsilon(1). F(0) has three main subunits: a(1), b(2) and c(10-14). The alpha and beta chains form an alternating ring which encloses part of the gamma chain. F(1) is attached to F(0) by a central stalk formed by the gamma and epsilon chains, while a peripheral stalk is formed by the delta and b chains.

Its subcellular location is the cell membrane. In terms of biological role, f(1)F(0) ATP synthase produces ATP from ADP in the presence of a proton or sodium gradient. F-type ATPases consist of two structural domains, F(1) containing the extramembraneous catalytic core and F(0) containing the membrane proton channel, linked together by a central stalk and a peripheral stalk. During catalysis, ATP synthesis in the catalytic domain of F(1) is coupled via a rotary mechanism of the central stalk subunits to proton translocation. Its function is as follows. Component of the F(0) channel, it forms part of the peripheral stalk, linking F(1) to F(0). The polypeptide is ATP synthase subunit b (Mycolicibacterium paratuberculosis (strain ATCC BAA-968 / K-10) (Mycobacterium paratuberculosis)).